Here is a 68-residue protein sequence, read N- to C-terminus: Agnoprotein (68 aa).

Residues 1–24 (MVLRQLSRQASVKVGKTWTGTKRR) are Cytoplasmic-facing. A phosphoserine; by host mark is found at S7 and S11. Residue T21 is modified to Phosphothreonine; by host. The helical; Signal-anchor for type II membrane protein transmembrane segment at 25–41 (AQRIFIFILELLLDFCR) threads the bilayer. The Extracellular segment spans residues 42 to 68 (GEDSVDGKKKKDSLTDKTETVTEKKES). The segment at 44–68 (DSVDGKKKKDSLTDKTETVTEKKES) is disordered.

Belongs to the polyomavirus agnoprotein family. In terms of assembly, homooligomer. Interacts with VP1. Interacts with large T antigen; this interaction may impact upon the activity of T-antigen on the control of viral gene transcription and replication. Interacts with small t antigen. Interacts with host CBX5; this interaction induces the dissociation of CBX5 from LBR, resulting in destabilization of the nuclear envelope. Phosphorylated by host PKC. Phosphorylation alters the stability and may also have an impact on the subcellular location.

Its subcellular location is the host cytoplasm. It localises to the host nucleus membrane. The protein resides in the host rough endoplasmic reticulum membrane. It is found in the host cell membrane. Alters the structure of the nuclear envelope by interacting with host CBX5 and disrupting CBX5 association with LBR. Involved in the perinuclear-nuclear localization of the capsid protein VP1 during virion assembly and maturation. Plays an important role in the release of progeny virions from infected cells and in viral propagation, probably by acting as a viral ionic channel in the host plasma membrane. Allows influx of extracellular calcium ions in the host cell. May contribute to viral genome transcription and translation of viral late proteins. The protein is Agnoprotein of Simian virus 12 (strain wt100) (SV-12).